We begin with the raw amino-acid sequence, 5255 residues long: Bacitracin synthase 1 (5255 aa).

Residues 39–612 form a domain 1 (isoleucine-activating) region; that stretch reads LHELFEEQAM…IKELSAFIEA (574 aa). The segment covering 519–531 has biased composition (basic and acidic residues); that stretch reads VDRKALPEPDRTA. Positions 519–542 are disordered; it reads VDRKALPEPDRTAGAENEYEAPRN. In terms of domain architecture, Carrier 1 spans 539–614; that stretch reads APRNETEEKL…ELSAFIEANH (76 aa). O-(pantetheine 4'-phosphoryl)serine is present on serine 574. Residues 621-1037 are cyclization; it reads TLVTRAADPE…ITWDYVEQIF (417 aa). Residues 1109–1648 form a domain 2 (cysteine-activating) region; it reads HHDEVMTYQE…FKNDTIIALD (540 aa). Carrier domains follow at residues 1580 to 1655, 2616 to 2691, 3659 to 3733, and 5166 to 5241; these read LPEN…KNRE, APRD…VRRR, PPRN…TEET, and APRN…LTAE. Serine 1615, serine 2651, serine 3694, and serine 5201 each carry O-(pantetheine 4'-phosphoryl)serine. Residues 2124 to 2689 are domain 3 (leucine-activating); it reads GKAIHQLFEE…IKGLRDISVR (566 aa). Residues 3164–3732 form a domain 4 (glutamine-activating) region; it reads DHPAVAFGDE…KDLSRFITEE (569 aa). Positions 4668–5249 are domain 5 (isoleucine-activating); it reads LHELFEEQAM…AEAESAVSEE (582 aa).

The protein belongs to the ATP-dependent AMP-binding enzyme family. In terms of assembly, large multienzyme complex of BA1, BA2 and BA3. It depends on pantetheine 4'-phosphate as a cofactor.

The enzyme catalyses L-glutamate = D-glutamate. The protein operates within antibiotic biosynthesis; bacitracin biosynthesis. Activates five amino acids, incorporates two D-amino acids, releases and cyclizes the mature bacitracin. This is Bacitracin synthase 1 (bacA) from Bacillus licheniformis.